Here is a 379-residue protein sequence, read N- to C-terminus: Cytochrome b (379 aa).

Helical transmembrane passes span 34–54 (LGSL…FLTM), 78–99 (WLIR…YLHV), 114–134 (WMTG…GYVL), and 179–199 (FYTF…IHLF). Heme b-binding residues include His84 and His98. 2 residues coordinate heme b: His183 and His197. His202 lines the a ubiquinone pocket. 4 consecutive transmembrane segments (helical) span residues 227 to 247 (YKDM…CLID), 289 to 309 (LGGV…PFYN), 321 to 341 (MNQI…WIGK), and 348 to 368 (YIMT…FNVH).

It belongs to the cytochrome b family. The main subunits of complex b-c1 are: cytochrome b, cytochrome c1 and the Rieske protein. Heme b is required as a cofactor.

It is found in the mitochondrion inner membrane. Its function is as follows. Component of the ubiquinol-cytochrome c reductase complex (complex III or cytochrome b-c1 complex) that is part of the mitochondrial respiratory chain. The b-c1 complex mediates electron transfer from ubiquinol to cytochrome c. Contributes to the generation of a proton gradient across the mitochondrial membrane that is then used for ATP synthesis. The protein is Cytochrome b (MT-CYB) of Locusta migratoria (Migratory locust).